The chain runs to 315 residues: MDSTARKQRGADKTARIPIKIVPAERLKKPEWIRIRLGAGHEAERFNEIKASLREHKLHTVCEEASCPNIHECFGKGTATFMIMGDICTRRCPFCDVGHGRPEPLNANEPQELAATIGAMRLNYVVITSVDRDDLRDGGAQHFVDCIRETRAASPKTRIEVLVPDFRGRLDVALEIFDQAPPDVMNHNLETVPRLYKQARPGADYAYSLRLLKEFKARHPDVPTKSGLMVGLGETDDEILDVLRDLRAHDVEMLTIGQYLQPSTGHLPVLRYVHPDTFKMFETEALAMGFKNAACGPMVRSSYWADQQAYGAGVV.

[4Fe-4S] cluster-binding residues include C62, C67, C73, C88, C92, C95, and S302. In terms of domain architecture, Radical SAM core spans 74 to 291 (FGKGTATFMI…ETEALAMGFK (218 aa)).

Belongs to the radical SAM superfamily. Lipoyl synthase family. Requires [4Fe-4S] cluster as cofactor.

It is found in the cytoplasm. It catalyses the reaction [[Fe-S] cluster scaffold protein carrying a second [4Fe-4S](2+) cluster] + N(6)-octanoyl-L-lysyl-[protein] + 2 oxidized [2Fe-2S]-[ferredoxin] + 2 S-adenosyl-L-methionine + 4 H(+) = [[Fe-S] cluster scaffold protein] + N(6)-[(R)-dihydrolipoyl]-L-lysyl-[protein] + 4 Fe(3+) + 2 hydrogen sulfide + 2 5'-deoxyadenosine + 2 L-methionine + 2 reduced [2Fe-2S]-[ferredoxin]. Its pathway is protein modification; protein lipoylation via endogenous pathway; protein N(6)-(lipoyl)lysine from octanoyl-[acyl-carrier-protein]: step 2/2. Its function is as follows. Catalyzes the radical-mediated insertion of two sulfur atoms into the C-6 and C-8 positions of the octanoyl moiety bound to the lipoyl domains of lipoate-dependent enzymes, thereby converting the octanoylated domains into lipoylated derivatives. The sequence is that of Lipoyl synthase from Aromatoleum aromaticum (strain DSM 19018 / LMG 30748 / EbN1) (Azoarcus sp. (strain EbN1)).